Here is a 237-residue protein sequence, read N- to C-terminus: Orotidine 5'-phosphate decarboxylase (237 aa).

Residues D11, K34, 61 to 70 (DLKLHDIPNT), T124, R186, Q195, G215, and R216 each bind substrate. The active-site Proton donor is the K63.

It belongs to the OMP decarboxylase family. Type 1 subfamily. In terms of assembly, homodimer.

It catalyses the reaction orotidine 5'-phosphate + H(+) = UMP + CO2. Its pathway is pyrimidine metabolism; UMP biosynthesis via de novo pathway; UMP from orotate: step 2/2. In terms of biological role, catalyzes the decarboxylation of orotidine 5'-monophosphate (OMP) to uridine 5'-monophosphate (UMP). The chain is Orotidine 5'-phosphate decarboxylase from Lactococcus lactis subsp. lactis (strain IL1403) (Streptococcus lactis).